Here is a 333-residue protein sequence, read N- to C-terminus: Biotin synthase (333 aa).

Residues 51–278 (RAIQLSTLMS…KSYVRLSAGR (228 aa)) enclose the Radical SAM core domain. [4Fe-4S] cluster is bound by residues Cys66, Cys70, and Cys73. Positions 110, 141, 201, and 273 each coordinate [2Fe-2S] cluster.

This sequence belongs to the radical SAM superfamily. Biotin synthase family. Homodimer. Requires [4Fe-4S] cluster as cofactor. The cofactor is [2Fe-2S] cluster.

It catalyses the reaction (4R,5S)-dethiobiotin + (sulfur carrier)-SH + 2 reduced [2Fe-2S]-[ferredoxin] + 2 S-adenosyl-L-methionine = (sulfur carrier)-H + biotin + 2 5'-deoxyadenosine + 2 L-methionine + 2 oxidized [2Fe-2S]-[ferredoxin]. The protein operates within cofactor biosynthesis; biotin biosynthesis; biotin from 7,8-diaminononanoate: step 2/2. Its function is as follows. Catalyzes the conversion of dethiobiotin (DTB) to biotin by the insertion of a sulfur atom into dethiobiotin via a radical-based mechanism. This chain is Biotin synthase, found in Haemophilus influenzae (strain 86-028NP).